Reading from the N-terminus, the 130-residue chain is DNA-directed RNA polymerase subunit omega (130 aa).

The segment at 110 to 130 is disordered; that stretch reads EELLKGLEGLAPPEEQPEEDE.

It belongs to the RNA polymerase subunit omega family. The RNAP catalytic core consists of 2 alpha, 1 beta, 1 beta' and 1 omega subunit. When a sigma factor is associated with the core the holoenzyme is formed, which can initiate transcription.

The catalysed reaction is RNA(n) + a ribonucleoside 5'-triphosphate = RNA(n+1) + diphosphate. Its function is as follows. Promotes RNA polymerase assembly. Latches the N- and C-terminal regions of the beta' subunit thereby facilitating its interaction with the beta and alpha subunits. This chain is DNA-directed RNA polymerase subunit omega, found in Rhodopseudomonas palustris (strain HaA2).